A 249-amino-acid chain; its full sequence is 2,3-bisphosphoglycerate-dependent phosphoglycerate mutase (249 aa).

Substrate contacts are provided by residues 8-15, 21-22, arginine 60, 87-90, lysine 98, 114-115, and 183-184; these read RHGESTWN, TG, ERHY, RR, and GN. The active-site Tele-phosphohistidine intermediate is histidine 9. The active-site Proton donor/acceptor is the glutamate 87.

This sequence belongs to the phosphoglycerate mutase family. BPG-dependent PGAM subfamily. As to quaternary structure, homodimer.

It carries out the reaction (2R)-2-phosphoglycerate = (2R)-3-phosphoglycerate. Its pathway is carbohydrate degradation; glycolysis; pyruvate from D-glyceraldehyde 3-phosphate: step 3/5. Functionally, catalyzes the interconversion of 2-phosphoglycerate and 3-phosphoglycerate. The sequence is that of 2,3-bisphosphoglycerate-dependent phosphoglycerate mutase from Burkholderia mallei (strain NCTC 10247).